The following is a 383-amino-acid chain: Acetylornithine deacetylase (383 aa).

Residue histidine 80 participates in Zn(2+) binding. Aspartate 82 is an active-site residue. A Zn(2+)-binding site is contributed by aspartate 112. Residue glutamate 144 is part of the active site. The Zn(2+) site is built by glutamate 145, glutamate 169, and histidine 355.

It belongs to the peptidase M20A family. ArgE subfamily. As to quaternary structure, homodimer. It depends on Zn(2+) as a cofactor. Co(2+) serves as cofactor. Glutathione is required as a cofactor.

The protein resides in the cytoplasm. The enzyme catalyses N(2)-acetyl-L-ornithine + H2O = L-ornithine + acetate. It functions in the pathway amino-acid biosynthesis; L-arginine biosynthesis; L-ornithine from N(2)-acetyl-L-ornithine (linear): step 1/1. Functionally, catalyzes the hydrolysis of the amide bond of N(2)-acetylated L-amino acids. Cleaves the acetyl group from N-acetyl-L-ornithine to form L-ornithine, an intermediate in L-arginine biosynthesis pathway, and a branchpoint in the synthesis of polyamines. The protein is Acetylornithine deacetylase of Shigella flexneri.